An 82-amino-acid chain; its full sequence is Exodeoxyribonuclease 7 small subunit (82 aa).

It belongs to the XseB family. Heterooligomer composed of large and small subunits.

The protein resides in the cytoplasm. The enzyme catalyses Exonucleolytic cleavage in either 5'- to 3'- or 3'- to 5'-direction to yield nucleoside 5'-phosphates.. Bidirectionally degrades single-stranded DNA into large acid-insoluble oligonucleotides, which are then degraded further into small acid-soluble oligonucleotides. The chain is Exodeoxyribonuclease 7 small subunit from Mycobacterium marinum (strain ATCC BAA-535 / M).